We begin with the raw amino-acid sequence, 446 residues long: Xanthone prenyltransferase A (446 aa).

Positions 113, 199, 201, 263, 265, 267, 369, and 440 each coordinate dimethylallyl diphosphate.

Belongs to the tryptophan dimethylallyltransferase family.

It functions in the pathway secondary metabolite biosynthesis. Xanthone prenyltransferase involved in the conversion of monodictyphenone to the prenyl xanthones such as emericellin, shamixanthone and epishamixanthone. Monodictyphenone is first converted to variecoxanthone A via a paeciloxanthone intermediate by the consecutive actions of the FAD-dependent monooxygenase mdpD and the xanthone prenyltransferase xptB. XptB catalyzes regular O-prenylation at the hydroxy group of C-7 of the xanthone ring. Variecoxanthone A is further prenylated to emericellin by xptA before being reduced to shamixanthone and epishamixanthone by the dehydrogenase xptC. The protein is Xanthone prenyltransferase A of Emericella nidulans (strain FGSC A4 / ATCC 38163 / CBS 112.46 / NRRL 194 / M139) (Aspergillus nidulans).